We begin with the raw amino-acid sequence, 66 residues long: Large ribosomal subunit protein eL24 (66 aa).

4 residues coordinate Zn(2+): Cys-6, Cys-9, Cys-32, and Cys-36. The C4-type zinc finger occupies 6-36 (CSFCGKSIEPASGFLYVRKDGSVLNFCSRKC).

This sequence belongs to the eukaryotic ribosomal protein eL24 family. Part of the 50S ribosomal subunit. Forms a cluster with proteins L3 and L14. Requires Zn(2+) as cofactor.

Binds to the 23S rRNA. The sequence is that of Large ribosomal subunit protein eL24 from Picrophilus torridus (strain ATCC 700027 / DSM 9790 / JCM 10055 / NBRC 100828 / KAW 2/3).